We begin with the raw amino-acid sequence, 401 residues long: Acetate kinase (401 aa).

N7 contributes to the Mg(2+) binding site. K14 contributes to the ATP binding site. R90 lines the substrate pocket. Residue D147 is the Proton donor/acceptor of the active site. Residues 207–211, 282–284, and 331–335 each bind ATP; these read HMGNG, DMR, and GIGEN. E385 is a binding site for Mg(2+).

The protein belongs to the acetokinase family. As to quaternary structure, homodimer. The cofactor is Mg(2+). It depends on Mn(2+) as a cofactor.

It is found in the cytoplasm. It carries out the reaction acetate + ATP = acetyl phosphate + ADP. It participates in metabolic intermediate biosynthesis; acetyl-CoA biosynthesis; acetyl-CoA from acetate: step 1/2. Its function is as follows. Catalyzes the formation of acetyl phosphate from acetate and ATP. Can also catalyze the reverse reaction. This chain is Acetate kinase, found in Clostridium acetobutylicum (strain ATCC 824 / DSM 792 / JCM 1419 / IAM 19013 / LMG 5710 / NBRC 13948 / NRRL B-527 / VKM B-1787 / 2291 / W).